The following is a 338-amino-acid chain: UDP-N-acetylglucosamine--N-acetylmuramyl-(pentapeptide) pyrophosphoryl-undecaprenol N-acetylglucosamine transferase (338 aa).

UDP-N-acetyl-alpha-D-glucosamine contacts are provided by residues 10–12, Asn-122, Ser-177, and Gln-275; that span reads TGG.

This sequence belongs to the glycosyltransferase 28 family. MurG subfamily.

It localises to the cell inner membrane. It carries out the reaction di-trans,octa-cis-undecaprenyl diphospho-N-acetyl-alpha-D-muramoyl-L-alanyl-D-glutamyl-meso-2,6-diaminopimeloyl-D-alanyl-D-alanine + UDP-N-acetyl-alpha-D-glucosamine = di-trans,octa-cis-undecaprenyl diphospho-[N-acetyl-alpha-D-glucosaminyl-(1-&gt;4)]-N-acetyl-alpha-D-muramoyl-L-alanyl-D-glutamyl-meso-2,6-diaminopimeloyl-D-alanyl-D-alanine + UDP + H(+). Its pathway is cell wall biogenesis; peptidoglycan biosynthesis. Cell wall formation. Catalyzes the transfer of a GlcNAc subunit on undecaprenyl-pyrophosphoryl-MurNAc-pentapeptide (lipid intermediate I) to form undecaprenyl-pyrophosphoryl-MurNAc-(pentapeptide)GlcNAc (lipid intermediate II). This chain is UDP-N-acetylglucosamine--N-acetylmuramyl-(pentapeptide) pyrophosphoryl-undecaprenol N-acetylglucosamine transferase, found in Sulfurovum sp. (strain NBC37-1).